Reading from the N-terminus, the 739-residue chain is Catalase-peroxidase (739 aa).

A disordered region spans residues 1 to 20; that stretch reads MGSNECPYSRQNANIGGGGQ. Positions 94-217 form a cross-link, tryptophyl-tyrosyl-methioninium (Trp-Tyr) (with M-243); the sequence is WHSAGTYRVF…LAASHMGLIY (124 aa). The active-site Proton acceptor is histidine 95. The segment at residues 217–243 is a cross-link (tryptophyl-tyrosyl-methioninium (Tyr-Met) (with W-94)); that stretch reads YVNPEGPNKNPDPVLAAKDIRITFGRM. Position 258 (histidine 258) interacts with heme b.

The protein belongs to the peroxidase family. Peroxidase/catalase subfamily. Homodimer or homotetramer. The cofactor is heme b. Post-translationally, formation of the three residue Trp-Tyr-Met cross-link is important for the catalase, but not the peroxidase activity of the enzyme.

The protein localises to the cytoplasm. It catalyses the reaction H2O2 + AH2 = A + 2 H2O. It carries out the reaction 2 H2O2 = O2 + 2 H2O. Functionally, bifunctional enzyme with both catalase and broad-spectrum peroxidase activity. This chain is Catalase-peroxidase, found in Emericella nidulans (strain FGSC A4 / ATCC 38163 / CBS 112.46 / NRRL 194 / M139) (Aspergillus nidulans).